We begin with the raw amino-acid sequence, 115 residues long: NADH-ubiquinone oxidoreductase chain 3 (115 aa).

A run of 3 helical transmembrane segments spans residues isoleucine 3–tryptophan 23, phenylalanine 55–leucine 75, and threonine 86–tryptophan 106.

This sequence belongs to the complex I subunit 3 family. As to quaternary structure, core subunit of respiratory chain NADH dehydrogenase (Complex I) which is composed of 45 different subunits. Interacts with TMEM186. Interacts with TMEM242.

The protein resides in the mitochondrion inner membrane. It catalyses the reaction a ubiquinone + NADH + 5 H(+)(in) = a ubiquinol + NAD(+) + 4 H(+)(out). Core subunit of the mitochondrial membrane respiratory chain NADH dehydrogenase (Complex I) which catalyzes electron transfer from NADH through the respiratory chain, using ubiquinone as an electron acceptor. Essential for the catalytic activity of complex I. The sequence is that of NADH-ubiquinone oxidoreductase chain 3 from Sus scrofa (Pig).